The primary structure comprises 546 residues: MEQLKTPQNQKTRPRNMLPKKKGKELKKRPCKVKRKLFGSENIRPNKKIPLASDVDNELEKKRGSMIRKRSETDLCPDPSVTDLLCHESLTVSPKFERDGLSACTEFENFMDTRKIVLSRNEKSVTDLSAHYPVLCNLGIFERIHSPFLFSIHIDTQSFSVVYVPHKESSCSQFCEPEKNMARILGSGSYGMVYDLNNVAIKASDDLESCISSYVSGVVRAKAGAQLTSRECVFKSLLICNSVCLNHKISLSKTYDTDLYKFTDWKLENVENYYSIFCNLAEAVRFLNMVCKINHCDISLANILIHHKEGIILEAVLADYSLAEVHPQYNGKCGILRQFDHRIQIVPKSYNKLCDMFNPGFRPMIAHKIILVEVYAEFDGKGNPVRHCNLDLCALAQVFLLCVIRMLDERGCREAQKYYENRLFTYSNEACTLNPIKYPLEYKDACCKVLAEHLVLFGILFYREVVDMFENLYDFLHASGDLSVRDLLEETYVNDSRDVRRQPIRYRHAQLQRHEIGQILLNDLQQLLSIITISDLEKDPYSVFRV.

The span at 1–11 (MEQLKTPQNQK) shows a compositional bias: polar residues. The disordered stretch occupies residues 1-29 (MEQLKTPQNQKTRPRNMLPKKKGKELKKR). A compositionally biased stretch (basic residues) spans 12-29 (TRPRNMLPKKKGKELKKR). ATP-binding positions include 185 to 193 (LGSGSYGMV) and Lys-202. The Proton acceptor role is filled by Asp-297.

The protein belongs to the protein kinase superfamily. Tyr protein kinase family. HCMV ganciclovir subfamily.

Functionally, phosphorylates the antiviral nucleoside analog ganciclovir. This chain is Probable ganciclovir kinase (U69), found in Human herpesvirus 7 (strain JI) (HHV-7).